Consider the following 242-residue polypeptide: Endoglucanase-5 (242 aa).

Positions 1-17 (MKATLVLGSLIVGAVSA) are cleaved as a signal peptide. A catalytic region spans residues 18 to 182 (YKATTTRYYD…ETDPTPVLGN (165 aa)). Catalysis depends on Asp27, which acts as the Nucleophile. The Proton donor role is filled by Asp134. The interval 177–206 (TPVLGNDTGSTPPGSSPPATSSSPPSGGGQ) is disordered. An N-linked (GlcNAc...) asparagine glycan is attached at Asn182. Low complexity predominate over residues 184 to 201 (TGSTPPGSSPPATSSSPP). A CBM1 domain is found at 205–241 (GQQTLYGQCGGAGWTGPTTCQAPGTCKVQNQWYSQCL). Intrachain disulfides connect Cys213-Cys230 and Cys224-Cys240.

Belongs to the glycosyl hydrolase 45 (cellulase K) family.

It catalyses the reaction Endohydrolysis of (1-&gt;4)-beta-D-glucosidic linkages in cellulose, lichenin and cereal beta-D-glucans.. The chain is Endoglucanase-5 (egl5) from Hypocrea jecorina (Trichoderma reesei).